A 480-amino-acid polypeptide reads, in one-letter code: Zinc finger protein ztf-6 (480 aa).

4 disordered regions span residues 92 to 160 (CHDS…TMMV), 174 to 198 (GTNG…EEHD), 282 to 307 (LDAG…PTAS), and 328 to 351 (DANT…MKVP). Low complexity-rich tracts occupy residues 95–105 (SATSTTTTVSH), 131–145 (SSIE…SSSV), 174–187 (GTNG…TSSS), and 286–296 (SSENDGSTSSS). 2 consecutive C2H2-type zinc fingers follow at residues 359–383 (YICP…FVTH) and 388–410 (FNCD…QKIH). The C2H2-type 3; degenerate zinc finger occupies 416–441 (YQCRGCGTNYTTQNGLRLHRQRNPAC). The disordered stretch occupies residues 461–480 (ALSGPLSKNSSPTKQMVSAP).

In terms of biological role, probable transcription factor, involved in regulation of dopamine neuron lineage specification. May play a role in maintaining robustness of the Wnt/beta-catenin asymmetry pathway. The chain is Zinc finger protein ztf-6 from Caenorhabditis elegans.